We begin with the raw amino-acid sequence, 184 residues long: Mitochondrial import inner membrane translocase subunit TIM22 (184 aa).

A disordered region spans residues 1–26 (MSLWGVYTGPQPPKKPLQEMTQEEQA). 2 cysteine pairs are disulfide-bonded: Cys-40–Cys-118 and Cys-137–Cys-156. The next 2 membrane-spanning stretches (helical) occupy residues 45–65 (VMAGVSGFALGGFFGLFMASM) and 151–171 (AALVGCAGFAAFSLAIDMYLN).

The protein belongs to the Tim17/Tim22/Tim23 family. Component of the TIM22 complex, whose core is composed of TIM22 and TIM54, associated with the 70 kDa heterohexamer composed of TIM9 and TIM10 (or TIM8 and TIM13).

It is found in the mitochondrion inner membrane. Functionally, essential core component of the TIM22 complex, a complex that mediates the import and insertion of multi-pass transmembrane proteins into the mitochondrial inner membrane. In the TIM22 complex, it constitutes the voltage-activated and signal-gated channel. Forms a twin-pore translocase that uses the membrane potential as external driving force in 2 voltage-dependent steps. The chain is Mitochondrial import inner membrane translocase subunit TIM22 from Candida albicans (strain SC5314 / ATCC MYA-2876) (Yeast).